The following is a 450-amino-acid chain: Saccharopine dehydrogenase [NADP(+), L-glutamate-forming] (450 aa).

NADP(+) is bound by residues 11–14, 33–35, 55–56, Ile76, 98–99, 125–127, and Ser175; these read SGFV, CRT, DV, TS, and LDP. Residues 99–100 and Asp126 contribute to the L-saccharopine site; that span reads SY. Residues Arg224 and 245–247 each bind L-saccharopine; that span reads TLR.

Belongs to the saccharopine dehydrogenase family. In terms of assembly, homodimer.

The catalysed reaction is L-saccharopine + NADP(+) + H2O = (S)-2-amino-6-oxohexanoate + L-glutamate + NADPH + H(+). Its pathway is amino-acid biosynthesis; L-lysine biosynthesis via AAA pathway; L-lysine from L-alpha-aminoadipate (fungal route): step 2/3. In Pyricularia oryzae (strain 70-15 / ATCC MYA-4617 / FGSC 8958) (Rice blast fungus), this protein is Saccharopine dehydrogenase [NADP(+), L-glutamate-forming] (LYS3).